A 559-amino-acid chain; its full sequence is 2-succinyl-5-enolpyruvyl-6-hydroxy-3-cyclohexene-1-carboxylate synthase (559 aa).

It belongs to the TPP enzyme family. MenD subfamily. In terms of assembly, homodimer. Requires Mg(2+) as cofactor. Mn(2+) serves as cofactor. It depends on thiamine diphosphate as a cofactor.

It catalyses the reaction isochorismate + 2-oxoglutarate + H(+) = 5-enolpyruvoyl-6-hydroxy-2-succinyl-cyclohex-3-ene-1-carboxylate + CO2. It participates in quinol/quinone metabolism; 1,4-dihydroxy-2-naphthoate biosynthesis; 1,4-dihydroxy-2-naphthoate from chorismate: step 2/7. The protein operates within quinol/quinone metabolism; menaquinone biosynthesis. Its function is as follows. Catalyzes the thiamine diphosphate-dependent decarboxylation of 2-oxoglutarate and the subsequent addition of the resulting succinic semialdehyde-thiamine pyrophosphate anion to isochorismate to yield 2-succinyl-5-enolpyruvyl-6-hydroxy-3-cyclohexene-1-carboxylate (SEPHCHC). The chain is 2-succinyl-5-enolpyruvyl-6-hydroxy-3-cyclohexene-1-carboxylate synthase from Edwardsiella ictaluri (strain 93-146).